A 1702-amino-acid polypeptide reads, in one-letter code: DNA polymerase (1702 aa).

DOD-type homing endonuclease domains are found at residues 776 to 909 and 1229 to 1368; these read LLGY…SLGI and LVGL…IVGI.

It belongs to the DNA polymerase type-B family. In terms of processing, this protein undergoes a protein self splicing that involves a post-translational excision of the two intervening regions (inteins) followed by peptide ligation.

The catalysed reaction is DNA(n) + a 2'-deoxyribonucleoside 5'-triphosphate = DNA(n+1) + diphosphate. In terms of biological role, in addition to polymerase activity, this DNA polymerase exhibits 3' to 5' exonuclease activity. Functionally, intein encoded endonucleases are thought to mediate intein mobility by site-specific recombination initiated by endonuclease cleavage at the 'homing site' in gene that lack the intein. The polypeptide is DNA polymerase (pol) (Thermococcus litoralis).